Here is a 284-residue protein sequence, read N- to C-terminus: 2-dehydro-3-deoxyphosphooctonate aldolase (284 aa).

It belongs to the KdsA family.

It localises to the cytoplasm. The catalysed reaction is D-arabinose 5-phosphate + phosphoenolpyruvate + H2O = 3-deoxy-alpha-D-manno-2-octulosonate-8-phosphate + phosphate. The protein operates within carbohydrate biosynthesis; 3-deoxy-D-manno-octulosonate biosynthesis; 3-deoxy-D-manno-octulosonate from D-ribulose 5-phosphate: step 2/3. It functions in the pathway bacterial outer membrane biogenesis; lipopolysaccharide biosynthesis. The chain is 2-dehydro-3-deoxyphosphooctonate aldolase from Escherichia fergusonii (strain ATCC 35469 / DSM 13698 / CCUG 18766 / IAM 14443 / JCM 21226 / LMG 7866 / NBRC 102419 / NCTC 12128 / CDC 0568-73).